The sequence spans 317 residues: uncharacterized protein (317 aa).

Basic and acidic residues predominate over residues 1–11; it reads MASAGAERRPG. Positions 1 to 164 are disordered; it reads MASAGAERRP…KAKKRKSLGA (164 aa). The segment covering 19 to 34 has biased composition (polar residues); it reads GQGQLTEEPGSAQTSE. Composition is skewed to basic and acidic residues over residues 47-58 and 71-92; these read HEARGTQSEDQR and EGPK…ERGP. 2 stretches are compositionally biased toward basic residues: residues 100 to 110 and 151 to 161; these read RPRHGPKRKPV and KQHKKAKKRKS.

This is an uncharacterized protein from Homo sapiens (Human).